The chain runs to 252 residues: Small ribosomal subunit protein eS1 (252 aa).

Belongs to the eukaryotic ribosomal protein eS1 family. In terms of assembly, component of the small ribosomal subunit. Mature ribosomes consist of a small (40S) and a large (60S) subunit. The 40S subunit contains about 33 different proteins and 1 molecule of RNA (18S). The 60S subunit contains about 49 different proteins and 3 molecules of RNA (25S, 5.8S and 5S).

The protein localises to the cytoplasm. This is Small ribosomal subunit protein eS1 from Enterocytozoon bieneusi (strain H348) (Microsporidian parasite).